Here is a 352-residue protein sequence, read N- to C-terminus: Non-disjunction protein 1 (352 aa).

Interacts with MPS3.

Its subcellular location is the nucleus. The protein localises to the chromosome. The protein resides in the telomere. In terms of biological role, required for telomeric clustering (bouquet stage) during meiosis 1 prophase, formation and efficient homolog pairing, meiosis 1 disjunction, and telomere deletion during meiosis. Also promotes meiotic recombination. The sequence is that of Non-disjunction protein 1 (NDJ1) from Saccharomyces cerevisiae (strain ATCC 204508 / S288c) (Baker's yeast).